A 927-amino-acid polypeptide reads, in one-letter code: MLDDYYTWTYPDIPENVAQELLQLNGSLVVVGVVGRSDCDLANKMLAFGMEPPDDHTPEDGQIQCYYKPGTFSLLLHFESTYDAEISGQMIDVCIEDVDTPFDIDSFFERIRCRFVRMMLLALHVCHIVVWAKFAREQHLMQFLPQMLRETPAARISERTRLCAPRILFLFENFPGDEPKTRESVSTCEFQMEDCIYELLRRYNIVTNSSSNSLVALPNNKQFVFFNAHEELRDDKLLKAIDCLNETMYKPDLKEEEEDLEILAMAPFDGFVKPFTMPVYEKEWENLQYQEDHTVWNFLQRHVHDALVGCFDAGSFKQHAQQGPFQLLNSREWHDCMATMHKLLVENAKDPDHETSNEEYKLFLKNFDEDLNYEKKFWAHLCELGLKKGIAAYKNAAPANYGTATHRQLLADATLAFEEEGRGPQAQAALAKLAAICHKHWEDGRQQCEQLSLRSHPCTLPKNMPHEKHNSGVIHISTCNCGRTQGRREDPFNLRQANYEFYEHIAQMCNLCVKVKQYQFPIFEPSVSDYRAAAFEAAFPLLNTGKSGAPQDEDAGEDEAEEEEGQERELPTKKQLQNTASNCCSHPLSPTFGSDLNMSIAGFGASLKESQARSEQLSNSEQNTTRSGSSSVDTENELVVELQEPAKKEAREDVGPTDAVSTSTTEYLPGLVHTVSNFDLLPLFPSWSLACVGPSSIYSHNTGLQEHFQSGFLSGANFLLPWDVQLRLVHALKQQYQHHHHGKKQQRWKKQGDRLSLKIFVGMEYECSRGHRFMMCAPDRVLRGGADIERDTCSKVVHNNMPLYYPCPCRSQKNFLAQLMRIHVVTPKAPVNIIVDPKVCVGRYTFTLGSILPPRLSQSAYWIIRLPYVYQGDDVLIAPPDQLDPDYPLAGGYLLPGMFGVVETDPTLDLNEPGMMGASAAGNFTRI.

Disordered regions lie at residues Asn-543–Ser-581, Gln-611–Asn-636, and Gln-643–Thr-662. Residues Gln-551–Gln-566 show a composition bias toward acidic residues. Polar residues predominate over residues Arg-613–Asp-633. Over residues Glu-644–Val-654 the composition is skewed to basic and acidic residues.

It belongs to the SMG8 family.

Functionally, involved in nonsense-mediated decay (NMD) of mRNAs containing premature stop codons. Probable component of kinase complex containing nonC and recruited to stalled ribosomes. This Drosophila sechellia (Fruit fly) protein is Nonsense-mediated mRNA decay factor SMG8.